The primary structure comprises 506 residues: Sodium-coupled neutral amino acid symporter 2 (506 aa).

The interval 1–23 (MKKAEMGRFSISPDEDSSSYSSN) is disordered. Topologically, residues 1-76 (MKKAEMGRFS…HPGTTSFGMS (76 aa)) are cytoplasmic. Positions 1–96 (MKKAEMGRFS…SGILGLSYAM (96 aa)) are regulates protein turnover upon amino acid deprivation. Phosphoserine is present on residues Ser-10, Ser-12, Ser-21, Ser-22, and Ser-55. The chain crosses the membrane as a helical span at residues 77-96 (VFNLSNAIVGSGILGLSYAM). Asn-82 contacts Na(+). Over 97–102 (ANTGIA) the chain is Extracellular. A helical transmembrane segment spans residues 103 to 123 (LFIILLTFVSIFSLYSVHLLL). Residues 124–158 (KTANEGGSLLYEQLGYKAFGLVGKLAASGSITMQN) lie on the Cytoplasmic side of the membrane. The chain crosses the membrane as a helical span at residues 159 to 177 (IGAMSSYLFIVKYELPLVI). The Extracellular portion of the chain corresponds to 178–188 (QALTNIEDKTG). A helical membrane pass occupies residues 189–209 (LWYLNGNYLVLLVSLVVILPL). Residues 210–217 (SLFRNLGY) are Cytoplasmic-facing. A helical membrane pass occupies residues 218–238 (LGYTSGLSLLCMVFFLIVVIC). The Extracellular portion of the chain corresponds to 239–292 (KKFQVPCPVEAALIINETINTTLTQPTALVPALSHNVTENDSCRPHYFIFNSQT). Cys-245 and Cys-281 are oxidised to a cystine. N-linked (GlcNAc...) asparagine glycans are attached at residues Asn-258 and Asn-274. A helical membrane pass occupies residues 293 to 313 (VYAVPILIFSFVCHPAVLPIY). The Cytoplasmic portion of the chain corresponds to 314 to 329 (EELKDRSRRRMMNVSK). A helical transmembrane segment spans residues 330-350 (ISFFAMFLMYLLAALFGYLTF). The Extracellular portion of the chain corresponds to 351–371 (YEHVESELLHTYSSILGTDIL). The chain crosses the membrane as a helical span at residues 372-392 (LLIVRLAVLMAVTLTVPVVIF). Thr-386 is a Na(+) binding site. Over 393 to 413 (PIRSSVTHLLCASKDFSWWRH) the chain is Cytoplasmic. Residues 414-434 (SLITVSILAFTNLLVIFVPTI) traverse the membrane as a helical segment. Over 435–436 (RD) the chain is Extracellular. A helical membrane pass occupies residues 437–457 (IFGFIGASAASMLIFILPSAF). Over 458–472 (YIKLVKKEPMKSVQK) the chain is Cytoplasmic. Residues 473–495 (IGALFFLLSGVLVMTGSMALIVL) traverse the membrane as a helical segment. Residues 496–506 (DWVHNAPGGGH) are Extracellular-facing.

This sequence belongs to the amino acid/polyamine transporter 2 family. Polyubiquitination by NEDD4L regulates the degradation and the activity of SLC38A2. Ubiquitously expressed. Expressed in neocortex. Widely expressed in the central nervous system with higher concentrations in caudal regions. Expressed by glutamatergic and GABAergic neurons together with astrocytes and other non-neuronal cells in the cerebral cortex (at protein level).

It is found in the cell membrane. It carries out the reaction L-alanine(in) + Na(+)(in) = L-alanine(out) + Na(+)(out). It catalyses the reaction glycine(in) + Na(+)(in) = glycine(out) + Na(+)(out). The enzyme catalyses L-serine(in) + Na(+)(in) = L-serine(out) + Na(+)(out). The catalysed reaction is L-proline(in) + Na(+)(in) = L-proline(out) + Na(+)(out). It carries out the reaction L-methionine(in) + Na(+)(in) = L-methionine(out) + Na(+)(out). It catalyses the reaction L-histidine(in) + Na(+)(in) = L-histidine(out) + Na(+)(out). The enzyme catalyses L-asparagine(in) + Na(+)(in) = L-asparagine(out) + Na(+)(out). The catalysed reaction is L-glutamine(in) + Na(+)(in) = L-glutamine(out) + Na(+)(out). It carries out the reaction L-threonine(in) + Na(+)(in) = L-threonine(out) + Na(+)(out). It catalyses the reaction L-leucine(in) + Na(+)(in) = L-leucine(out) + Na(+)(out). The enzyme catalyses L-phenylalanine(in) + Na(+)(in) = L-phenylalanine(out) + Na(+)(out). With respect to regulation, inhibited by N-methyl-D-glucamine. Inhibited by choline. Allosteric regulation of sodium ions binding by pH. Functionally, symporter that cotransports neutral amino acids and sodium ions from the extracellular to the intracellular side of the cell membrane. The transport is pH-sensitive, Li(+)-intolerant, electrogenic, driven by the Na(+) electrochemical gradient and cotransports of neutral amino acids and sodium ions with a stoichiometry of 1:1. May function in the transport of amino acids at the blood-brain barrier. May function in the transport of amino acids in the supply of maternal nutrients to the fetus through the placenta. Maintains a key metabolic glutamine/glutamate balance underpinning retrograde signaling by dendritic release of the neurotransmitter glutamate. Transports L-proline in differentiating osteoblasts for the efficient synthesis of proline-enriched proteins and provides proline essential for osteoblast differentiation and bone formation during bone development. In Homo sapiens (Human), this protein is Sodium-coupled neutral amino acid symporter 2.